We begin with the raw amino-acid sequence, 525 residues long: Peptide chain release factor 3 (525 aa).

One can recognise a tr-type G domain in the interval 11–279 (NKRRTFAIIS…TYLQFAPAPS (269 aa)). Residues 20–27 (SHPDAGKT), 88–92 (DTPGH), and 142–145 (NKFD) each bind GTP.

This sequence belongs to the TRAFAC class translation factor GTPase superfamily. Classic translation factor GTPase family. PrfC subfamily.

The protein localises to the cytoplasm. In terms of biological role, increases the formation of ribosomal termination complexes and stimulates activities of RF-1 and RF-2. It binds guanine nucleotides and has strong preference for UGA stop codons. It may interact directly with the ribosome. The stimulation of RF-1 and RF-2 is significantly reduced by GTP and GDP, but not by GMP. In Limosilactobacillus reuteri (strain DSM 20016) (Lactobacillus reuteri), this protein is Peptide chain release factor 3.